A 402-amino-acid chain; its full sequence is Probable tRNA pseudouridine synthase tag-124 (402 aa).

D85 acts as the Nucleophile in catalysis. Positions 383–402 (SKKEKMAEKKKNGEESSDKL) are disordered.

This sequence belongs to the tRNA pseudouridine synthase TruA family.

The catalysed reaction is a uridine in tRNA = a pseudouridine in tRNA. Formation of pseudouridine at position 38 and 39 in the anticodon stem and loop of transfer RNAs. The protein is Probable tRNA pseudouridine synthase tag-124 (tag-124) of Caenorhabditis elegans.